The sequence spans 291 residues: Lipoyl synthase (291 aa).

The [4Fe-4S] cluster site is built by C33, C38, C44, C59, C63, C66, and S274. Positions 45–263 (WGEGTATFLI…REAAEAMGFK (219 aa)) constitute a Radical SAM core domain.

This sequence belongs to the radical SAM superfamily. Lipoyl synthase family. It depends on [4Fe-4S] cluster as a cofactor.

It localises to the cytoplasm. The enzyme catalyses [[Fe-S] cluster scaffold protein carrying a second [4Fe-4S](2+) cluster] + N(6)-octanoyl-L-lysyl-[protein] + 2 oxidized [2Fe-2S]-[ferredoxin] + 2 S-adenosyl-L-methionine + 4 H(+) = [[Fe-S] cluster scaffold protein] + N(6)-[(R)-dihydrolipoyl]-L-lysyl-[protein] + 4 Fe(3+) + 2 hydrogen sulfide + 2 5'-deoxyadenosine + 2 L-methionine + 2 reduced [2Fe-2S]-[ferredoxin]. It functions in the pathway protein modification; protein lipoylation via endogenous pathway; protein N(6)-(lipoyl)lysine from octanoyl-[acyl-carrier-protein]: step 2/2. Catalyzes the radical-mediated insertion of two sulfur atoms into the C-6 and C-8 positions of the octanoyl moiety bound to the lipoyl domains of lipoate-dependent enzymes, thereby converting the octanoylated domains into lipoylated derivatives. The chain is Lipoyl synthase from Pyrobaculum calidifontis (strain DSM 21063 / JCM 11548 / VA1).